We begin with the raw amino-acid sequence, 187 residues long: Orotate phosphoribosyltransferase (187 aa).

5-phospho-alpha-D-ribose 1-diphosphate is bound by residues Arg103, Lys104, Lys107, and 129–137 (EDVTTSGGS). Residues Thr133 and Arg161 each contribute to the orotate site.

It belongs to the purine/pyrimidine phosphoribosyltransferase family. PyrE subfamily. In terms of assembly, homodimer. Requires Mg(2+) as cofactor.

It catalyses the reaction orotidine 5'-phosphate + diphosphate = orotate + 5-phospho-alpha-D-ribose 1-diphosphate. The protein operates within pyrimidine metabolism; UMP biosynthesis via de novo pathway; UMP from orotate: step 1/2. In terms of biological role, catalyzes the transfer of a ribosyl phosphate group from 5-phosphoribose 1-diphosphate to orotate, leading to the formation of orotidine monophosphate (OMP). The sequence is that of Orotate phosphoribosyltransferase from Methanosarcina mazei (strain ATCC BAA-159 / DSM 3647 / Goe1 / Go1 / JCM 11833 / OCM 88) (Methanosarcina frisia).